Here is a 568-residue protein sequence, read N- to C-terminus: Protein NDNF (568 aa).

Positions 1–19 (MVLLHWCLLWLLFPLSSRT) are cleaved as a signal peptide. 2 Fibronectin type-III domains span residues 261–331 (NSGK…VGTF) and 445–564 (PSLP…VVKT). Asn322 carries N-linked (GlcNAc...) asparagine glycosylation.

In terms of assembly, binds heparin and chondroitin sulfate. O-glycosylated; contains heparan sulfate and chondroitin sulfate. In terms of processing, N-glycosylated. Expressed in neurons along the gonadotropin-releasing hormone (GnRH) expressing neurons migratory route.

It localises to the secreted. In terms of biological role, secretory protein that plays a role in various cellular processes. Acts as a chemorepellent acting on gonadotropin-releasing hormone (GnRH) expressing neurons regulating their migration to the hypothalamus. Also promotes neuron migration, growth and survival as well as neurite outgrowth and is involved in the development of the olfactory system. May also act through the regulation of growth factors activity and downstream signaling. Also regulates extracellular matrix assembly and cell adhesiveness. Promotes endothelial cell survival, vessel formation and plays an important role in the process of revascularization through NOS3-dependent mechanisms. This chain is Protein NDNF (NDNF), found in Homo sapiens (Human).